The following is a 272-amino-acid chain: Cyanophycinase (272 aa).

Active-site charge relay system residues include Ser-132, Glu-150, and His-174.

Belongs to the peptidase S51 family.

It carries out the reaction [L-4-(L-arginin-2-N-yl)aspartate](n) + H2O = [L-4-(L-arginin-2-N-yl)aspartate](n-1) + L-4-(L-arginin-2-N-yl)aspartate. Functionally, exopeptidase that catalyzes the hydrolytic cleavage of multi-L-arginyl-poly-L-aspartic acid (cyanophycin; a water-insoluble reserve polymer) into aspartate-arginine dipeptides. The polypeptide is Cyanophycinase (cphB) (Geminocystis herdmanii (strain PCC 6308) (Synechocystis sp. (strain PCC 6308))).